The following is a 212-amino-acid chain: Pyridoxine/pyridoxamine 5'-phosphate oxidase (212 aa).

Substrate contacts are provided by residues 8-11 and Lys66; that span reads RREY. FMN-binding positions include 61-66, 76-77, Arg82, Lys83, and Gln105; these read RIVLLK and FT. Residues Tyr123, Arg127, and Ser131 each contribute to the substrate site. Residues 140 to 141 and Trp185 contribute to the FMN site; that span reads QS. 191–193 is a substrate binding site; it reads RLH. Arg195 is a binding site for FMN.

The protein belongs to the pyridoxamine 5'-phosphate oxidase family. Homodimer. The cofactor is FMN.

It carries out the reaction pyridoxamine 5'-phosphate + O2 + H2O = pyridoxal 5'-phosphate + H2O2 + NH4(+). The catalysed reaction is pyridoxine 5'-phosphate + O2 = pyridoxal 5'-phosphate + H2O2. It participates in cofactor metabolism; pyridoxal 5'-phosphate salvage; pyridoxal 5'-phosphate from pyridoxamine 5'-phosphate: step 1/1. Its pathway is cofactor metabolism; pyridoxal 5'-phosphate salvage; pyridoxal 5'-phosphate from pyridoxine 5'-phosphate: step 1/1. Catalyzes the oxidation of either pyridoxine 5'-phosphate (PNP) or pyridoxamine 5'-phosphate (PMP) into pyridoxal 5'-phosphate (PLP). This chain is Pyridoxine/pyridoxamine 5'-phosphate oxidase, found in Shewanella putrefaciens (strain CN-32 / ATCC BAA-453).